The following is a 432-amino-acid chain: Luc7-like protein 3 (432 aa).

N-acetylmethionine is present on methionine 1. A phosphoserine mark is found at serine 3, serine 110, and serine 115. The stretch at 124–181 (KNEEKIQVLTDKIDVLLQQIEELGSEGKVEEAQGMMKLVEQLKEERELLRSTTSTIES) forms a coiled coil. Lysine 231 is modified (N6-acetyllysine). The segment covering 234-287 (LRKRTEEPDRDERLKKEKQEREEREKEREREREERERKRRREEEEREKERARDR) has biased composition (basic and acidic residues). The interval 234-432 (LRKRTEEPDR…IKSEGDTQSN (199 aa)) is disordered. The segment covering 288 to 301 (ERRKRSRSRSRHSS) has biased composition (basic residues). A compositionally biased stretch (basic and acidic residues) spans 302 to 311 (RTSDRRCSRS). A compositionally biased stretch (basic residues) spans 312 to 367 (RDHKRSRSRDRRRSRSRDRRRSRSHDRSERKHRSRSRDRRRSKSRDRKSYKHRSKS). Basic and acidic residues predominate over residues 368–414 (RDREQDRKSKEKEKKGSDDKKSSVKSSSREKQSEDTNPESKESDTKN). Serine 420 is modified (phosphoserine). Basic and acidic residues predominate over residues 421–432 (EDIKSEGDTQSN). Residue lysine 424 forms a Glycyl lysine isopeptide (Lys-Gly) (interchain with G-Cter in SUMO1); alternate linkage. Lysine 424 is covalently cross-linked (Glycyl lysine isopeptide (Lys-Gly) (interchain with G-Cter in SUMO2); alternate). Residues serine 425 and serine 431 each carry the phosphoserine modification.

It belongs to the Luc7 family. In terms of assembly, may interact with SFRS1 and form homodimers. Interacts with JMJD6. Interacts with RBM25. Interacts with RSRC1 (via Arg/Ser-rich domain). Interacts with RRP1B.

Its subcellular location is the nucleus speckle. Its function is as follows. Binds cAMP regulatory element DNA sequence. May play a role in RNA splicing. In Mus musculus (Mouse), this protein is Luc7-like protein 3 (Luc7l3).